Here is a 297-residue protein sequence, read N- to C-terminus: Homoserine kinase (297 aa).

Proline 82 to serine 92 serves as a coordination point for ATP.

This sequence belongs to the GHMP kinase family. Homoserine kinase subfamily.

The protein localises to the cytoplasm. It carries out the reaction L-homoserine + ATP = O-phospho-L-homoserine + ADP + H(+). Its pathway is amino-acid biosynthesis; L-threonine biosynthesis; L-threonine from L-aspartate: step 4/5. In terms of biological role, catalyzes the ATP-dependent phosphorylation of L-homoserine to L-homoserine phosphate. This Bacillus cereus (strain ATCC 10987 / NRS 248) protein is Homoserine kinase.